The sequence spans 447 residues: Serine/threonine-protein phosphatase 2A 55 kDa regulatory subunit B alpha isoform (447 aa).

A2 is subject to N-acetylalanine. WD repeat units follow at residues 11–80 (QWCF…FQSH), 94–174 (EKIN…IFAN), 175–218 (AHTY…VDIK), 227–270 (EVIT…KLFE), 288–325 (ISDVKFSHSGRYMMTRDYLSVKIWDLNMENRPVETYQV), 347–381 (ECCWNGSDSVVMTGSYNNFFRMFDRNTKRDITLEA), and 414–446 (DFNKKILHTAWHPKENIIAVATTNNLYIFQDKV).

Belongs to the phosphatase 2A regulatory subunit B family. As to quaternary structure, PP2A consists of a common heterodimeric core enzyme, composed of a 36 kDa catalytic subunit (subunit C) and a 65 kDa constant regulatory subunit (PR65 or subunit A), that associates with a variety of regulatory subunits. Proteins that associate with the core dimer include three families of regulatory subunits B (the R2/B/PR55/B55, R3/B''/PR72/PR130/PR59 and R5/B'/B56 families), the 48 kDa variable regulatory subunit, viral proteins, and cell signaling molecules. Interacts with the PP2A C catalytic subunit PPP2CA. Interacts with the PP2A A subunit PPP2R1A. Interacts with TP53. Interacts with IER5. Interacts with MFHAS1; the interaction is direct. Interacts with PABIR1/FAM122A (via its N-terminus); the interaction is direct and inhibits PP2A activity. Interacts with ARPP19; the interaction is direct and inhibits PP2A activity. Interacts with CRTC3. Expressed in all tissues examined.

Substrate-recognition subunit of protein phosphatase 2A (PP2A) that plays a key role in cell cycle by controlling mitosis entry and exit. Involved in chromosome clustering during late mitosis by mediating dephosphorylation of MKI67. Essential for serine/threonine-protein phosphatase 2A-mediated dephosphorylation of WEE1, preventing its ubiquitin-mediated proteolysis, increasing WEE1 protein levels, and promoting the G2/M checkpoint. In Homo sapiens (Human), this protein is Serine/threonine-protein phosphatase 2A 55 kDa regulatory subunit B alpha isoform (PPP2R2A).